Consider the following 111-residue polypeptide: Small ribosomal subunit protein bS16 (111 aa).

It belongs to the bacterial ribosomal protein bS16 family.

This is Small ribosomal subunit protein bS16 from Rickettsia canadensis (strain McKiel).